Here is a 1292-residue protein sequence, read N- to C-terminus: Zinc finger CCCH domain-containing protein 44 (1292 aa).

A compositionally biased stretch (polar residues) spans 1–10 (MENQQKQLQQ). 2 disordered regions span residues 1 to 24 (MENQ…REES) and 72 to 107 (IDEA…KKED). The PHD-type zinc-finger motif lies at 110 to 176 (EDVCFICFDG…SYMCYTCTFS (67 aa)). 2 disordered regions span residues 256 to 313 (PWKE…LKKA) and 401 to 426 (KGAK…VHDP). The region spanning 313–396 (APGDTSWATK…LKLLESHVLI (84 aa)) is the SWIB/MDM2 domain. The segment covering 404-414 (KTTNGETTHAV) has biased composition (polar residues). One can recognise a Plus3 domain in the interval 453–586 (AIDVHNINLI…TAATLQAMRI (134 aa)). 4 disordered regions span residues 624-731 (PEVH…TQGP), 777-832 (TTLP…SNDP), 876-915 (DVRE…INGS), and 1170-1245 (TTVE…HNNR). Residues 661-675 (QNKGVNLNNVGNNVQ) show a composition bias toward low complexity. The segment covering 689–698 (VHADKDDCSK) has biased composition (basic and acidic residues). Over residues 699 to 708 (VHNNSSNIQE) the composition is skewed to polar residues. In terms of domain architecture, GYF spans 716–770 (SEIWHYRDPTGKTQGPFSMVQLRRWKSSGHFPPYLRIWRAHENQDESVLLTDALA). A compositionally biased stretch (low complexity) spans 813 to 829 (VNTSATSSSSSTVTAHS). Composition is skewed to polar residues over residues 882 to 899 (GTDQ…NTTK) and 906 to 915 (NGGSVSINGS). Low complexity-rich tracts occupy residues 1188–1206 (SSEP…SARG) and 1231–1244 (NNGH…SHNN). The C3H1-type zinc-finger motif lies at 1267 to 1292 (PKGLKICKFYESGYCKRGASCSFWHP).

The sequence is that of Zinc finger CCCH domain-containing protein 44 from Arabidopsis thaliana (Mouse-ear cress).